The sequence spans 348 residues: Putative transport protein HI_0338 (348 aa).

9 helical membrane-spanning segments follow: residues 7-27 (LHRT…VKLA), 28-48 (AEIV…SPII), 60-80 (LAIT…VGLI), 139-159 (VLLN…VVIF), 196-216 (VIGY…GVFI), 223-243 (VQYA…PNIG), 245-265 (IIAA…GIGF), 267-287 (VAIG…PKMM), and 296-316 (LVVF…GMLL).

The protein belongs to the autoinducer-2 exporter (AI-2E) (TC 2.A.86) family.

The protein resides in the cell membrane. In Haemophilus influenzae (strain ATCC 51907 / DSM 11121 / KW20 / Rd), this protein is Putative transport protein HI_0338.